We begin with the raw amino-acid sequence, 428 residues long: GTPase Obg (428 aa).

Residues 1 to 158 (MFVDQVKIYV…RDVILELKVL (158 aa)) form the Obg domain. One can recognise an OBG-type G domain in the interval 159-329 (ADVGLVGFPS…LLFEVANLIE (171 aa)). GTP-binding positions include 165 to 172 (GFPSVGKS), 190 to 194 (FTTIV), 212 to 215 (DLPG), 282 to 285 (NKMD), and 310 to 312 (SAV). The Mg(2+) site is built by S172 and T192. Residues 350–428 (KFDTEGVKFE…ILEYEFEFID (79 aa)) form the OCT domain.

It belongs to the TRAFAC class OBG-HflX-like GTPase superfamily. OBG GTPase family. In terms of assembly, monomer. The cofactor is Mg(2+).

Its subcellular location is the cytoplasm. In terms of biological role, an essential GTPase which binds GTP, GDP and possibly (p)ppGpp with moderate affinity, with high nucleotide exchange rates and a fairly low GTP hydrolysis rate. Plays a role in control of the cell cycle, stress response, ribosome biogenesis and in those bacteria that undergo differentiation, in morphogenesis control. In Bacillus cereus (strain ATCC 14579 / DSM 31 / CCUG 7414 / JCM 2152 / NBRC 15305 / NCIMB 9373 / NCTC 2599 / NRRL B-3711), this protein is GTPase Obg.